A 126-amino-acid polypeptide reads, in one-letter code: Small ribosomal subunit protein uS13 (126 aa).

The segment at 98-126 (PLRGQSTKNNARTRKGKKKTVANKKKATK) is disordered. The span at 108–126 (ARTRKGKKKTVANKKKATK) shows a compositional bias: basic residues.

Belongs to the universal ribosomal protein uS13 family. Part of the 30S ribosomal subunit. Forms a loose heterodimer with protein S19. Forms two bridges to the 50S subunit in the 70S ribosome.

Located at the top of the head of the 30S subunit, it contacts several helices of the 16S rRNA. In the 70S ribosome it contacts the 23S rRNA (bridge B1a) and protein L5 of the 50S subunit (bridge B1b), connecting the 2 subunits; these bridges are implicated in subunit movement. Contacts the tRNAs in the A and P-sites. This is Small ribosomal subunit protein uS13 from Parabacteroides distasonis (strain ATCC 8503 / DSM 20701 / CIP 104284 / JCM 5825 / NCTC 11152).